A 582-amino-acid chain; its full sequence is ATP-dependent lipid A-core flippase (582 aa).

5 consecutive transmembrane segments (helical) span residues 16 to 36, 69 to 89, 153 to 173, 250 to 270, and 275 to 295; these read LWPH…ALVI, FIIL…GYCM, IIGL…VLVV, LANP…LYLA, and IKET…FGLL. One can recognise an ABC transmembrane type-1 domain in the interval 29-310; it reads VAVVALVINA…LTSVTSDFQR (282 aa). The ABC transporter domain maps to 342 to 578; it reads IKVDNVTFTY…DGAYAQLHRI (237 aa). 376–383 contacts ATP; that stretch reads GRSGSGKS.

Belongs to the ABC transporter superfamily. Lipid exporter (TC 3.A.1.106) family. Homodimer.

It is found in the cell inner membrane. It catalyses the reaction ATP + H2O + lipid A-core oligosaccharideSide 1 = ADP + phosphate + lipid A-core oligosaccharideSide 2.. Its function is as follows. Involved in lipopolysaccharide (LPS) biosynthesis. Translocates lipid A-core from the inner to the outer leaflet of the inner membrane. Transmembrane domains (TMD) form a pore in the inner membrane and the ATP-binding domain (NBD) is responsible for energy generation. The polypeptide is ATP-dependent lipid A-core flippase (Aliivibrio fischeri (strain ATCC 700601 / ES114) (Vibrio fischeri)).